The following is a 284-amino-acid chain: Anaerobic dimethyl sulfoxide reductase chain YnfH (284 aa).

Residues 1-9 lie on the Periplasmic side of the membrane; sequence MGNGWHEWP. The chain crosses the membrane as a helical span at residues 10–30; that stretch reads LVIFTVLGQCVVGALIVSGIG. Residues 31–45 lie on the Cytoplasmic side of the membrane; it reads WFAAKNDADRQRIVR. A helical transmembrane segment spans residues 46–66; that stretch reads GMFFLWLLMGVGFIASVMHLG. The Periplasmic portion of the chain corresponds to 67–86; it reads SPLRAFNSLNRIGASGLSNE. Residues 87-107 traverse the membrane as a helical segment; that stretch reads IAAGSIFFAVGGLWWLVAVIG. The Cytoplasmic segment spans residues 108 to 115; sequence KMPQALGK. Residues 116-136 form a helical membrane-spanning segment; sequence LWLLFSMALGVIFVWMMTCVY. Over 137-148 the chain is Periplasmic; the sequence is QIDTVPTWHNGY. The chain crosses the membrane as a helical span at residues 149 to 169; it reads TTLAFFLTVLLSGPILAAAIL. Topologically, residues 170–180 are cytoplasmic; the sequence is RAARVTFNTTP. The helical transmembrane segment at 181-201 threads the bilayer; that stretch reads FAIISVLALIACAGVIVLQGL. Residues 202 to 222 lie on the Periplasmic side of the membrane; that stretch reads SLASIHSSVQQASALVPDYAS. The chain crosses the membrane as a helical span at residues 223 to 243; sequence LQVWRVVLLCAGLGCWLCPLI. At 244-250 the chain is on the cytoplasmic side; the sequence is RRREPHV. The chain crosses the membrane as a helical span at residues 251–271; sequence AGLILGLILILGGEMIGRVLF. The Periplasmic portion of the chain corresponds to 272-284; that stretch reads YGLHMTVGMAIAG.

This sequence belongs to the DmsC family. The complex consists of three subunits: YnfF, the reductase; YnfG, an electron transfer protein, and YnfH, a membrane anchor protein.

The protein localises to the cell inner membrane. Functionally, terminal reductase during anaerobic growth on various sulfoxide and N-oxide compounds. The C subunit anchors the other two subunits to the membrane and stabilize the catalytic subunits. The polypeptide is Anaerobic dimethyl sulfoxide reductase chain YnfH (ynfH) (Escherichia coli (strain K12)).